The chain runs to 221 residues: Glycerol metabolism activator (221 aa).

Residues 3–120 (KILIADDHPL…QMTDAIEQIL (118 aa)) enclose the Response regulatory domain. Position 55 is a 4-aspartylphosphate (Asp-55). The HTH luxR-type domain maps to 149–214 (APELLQALTR…QAILSAGDID (66 aa)). A DNA-binding region (H-T-H motif) is located at residues 173–192 (NKQIAYNLDIAETTVKAHVS).

In terms of biological role, positive activator for glycerol metabolism. Regulates the expression of qedA in a positive manner and governs the expression of ADH I and ADH IIB. General regulator of quinoprotein ethanol oxidation and affects expression of ADH IIG activity but is not the sole regulator. The protein is Glycerol metabolism activator of Pseudomonas putida (Arthrobacter siderocapsulatus).